An 88-amino-acid polypeptide reads, in one-letter code: Small ribosomal subunit protein bS20 (88 aa).

The interval 1 to 27 (MANIKSQIKRNKTNEKARLRNKAVKSS) is disordered.

It belongs to the bacterial ribosomal protein bS20 family.

In terms of biological role, binds directly to 16S ribosomal RNA. The chain is Small ribosomal subunit protein bS20 from Streptomyces griseus subsp. griseus (strain JCM 4626 / CBS 651.72 / NBRC 13350 / KCC S-0626 / ISP 5235).